The sequence spans 425 residues: Trigger factor (425 aa).

The PPIase FKBP-type domain occupies 158-231 (GDLVRISMEV…VQEVYRRTLP (74 aa)).

The protein belongs to the FKBP-type PPIase family. Tig subfamily.

It is found in the cytoplasm. The catalysed reaction is [protein]-peptidylproline (omega=180) = [protein]-peptidylproline (omega=0). Involved in protein export. Acts as a chaperone by maintaining the newly synthesized protein in an open conformation. Functions as a peptidyl-prolyl cis-trans isomerase. The chain is Trigger factor from Thermotoga neapolitana (strain ATCC 49049 / DSM 4359 / NBRC 107923 / NS-E).